Reading from the N-terminus, the 549-residue chain is DNA 3'-5' helicase XPB (549 aa).

Residues 1–130 (MTDGPLIVQS…RNKKIAPMLG (130 aa)) are required for protein stability or solubility. In terms of domain architecture, Helicase ATP-binding spans 190–344 (ADSFWAGGSG…DVFSLIGPKR (155 aa)). An ATP-binding site is contributed by 203–210 (LPCGAGKT). The DEAH box signature appears at 298 to 301 (DEVH). The region spanning 399–545 (VVKSILAKHP…YIIRDADDLL (147 aa)) is the Helicase C-terminal domain.

This sequence belongs to the helicase family. RAD25/XPB subfamily. In terms of assembly, monomer. The cofactor is Mn(2+). It depends on Mg(2+) as a cofactor.

The enzyme catalyses Couples ATP hydrolysis with the unwinding of duplex DNA by translocating in the 3'-5' direction.. The catalysed reaction is ATP + H2O = ADP + phosphate + H(+). Functionally, ATP-dependent 3'-5' DNA helicase, unwinds 3'-overhangs, 3'- flaps, and splayed-arm DNA substrates but not 5'-overhangs, 5'-flap substrates, 3-way junctions or Holliday junctions. Not highly efficient in vitro. Requires ATP hydrolysis for helicase activity; the ATPase activity is DNA-dependent and requires a minimum of 4 single-stranded nucleotides (nt) with 6-10 nt providing all necessary interactions for full processive unwinding. The ATPase prefers ATP over CTP or GTP, is almost inactive with TTP. DNA helicase activity requires ATP or dATP and only acts when the 3'-overhang is &gt;20 nt. Capable of unwinding a DNA:RNA hybrid if the 3'-overhang is DNA. Also catalyzes ATP-independent annealing of complementary DNA strands; annealing requires Mg(2+). The polypeptide is DNA 3'-5' helicase XPB (Mycobacterium tuberculosis (strain ATCC 25618 / H37Rv)).